A 520-amino-acid polypeptide reads, in one-letter code: Cysteine--tRNA ligase (520 aa).

Cys-29 is a binding site for Zn(2+). Positions 31–41 (PTVYNYPHLGN) match the 'HIGH' region motif. Cys-227, His-252, and Glu-256 together coordinate Zn(2+). The 'KMSKS' region signature appears at 301–305 (KMSKS). Lys-304 lines the ATP pocket.

Belongs to the class-I aminoacyl-tRNA synthetase family. In terms of assembly, monomer. Zn(2+) is required as a cofactor.

Its subcellular location is the cytoplasm. It catalyses the reaction tRNA(Cys) + L-cysteine + ATP = L-cysteinyl-tRNA(Cys) + AMP + diphosphate. The chain is Cysteine--tRNA ligase (cysS) from Treponema pallidum (strain Nichols).